The following is a 109-amino-acid chain: DNA-directed RNA polymerase subunit I (109 aa).

It carries out the reaction RNA(n) + a ribonucleoside 5'-triphosphate = RNA(n+1) + diphosphate. Functionally, DNA-dependent RNA polymerase catalyzes the transcription of DNA into RNA using the four ribonucleoside triphosphates as substrates. This is DNA-directed RNA polymerase subunit I (rpoI) from Methanocaldococcus jannaschii (strain ATCC 43067 / DSM 2661 / JAL-1 / JCM 10045 / NBRC 100440) (Methanococcus jannaschii).